The chain runs to 155 residues: Endoribonuclease YbeY (155 aa).

The tract at residues 64-84 is disordered; that stretch reads SFPMDEMRAPGDDEDPPSGLL. Positions 115, 119, and 125 each coordinate Zn(2+).

It belongs to the endoribonuclease YbeY family. The cofactor is Zn(2+).

It localises to the cytoplasm. Its function is as follows. Single strand-specific metallo-endoribonuclease involved in late-stage 70S ribosome quality control and in maturation of the 3' terminus of the 16S rRNA. The protein is Endoribonuclease YbeY of Cutibacterium acnes (strain DSM 16379 / KPA171202) (Propionibacterium acnes).